A 325-amino-acid chain; its full sequence is Holliday junction branch migration complex subunit RuvB (325 aa).

Residues 1–172 form a large ATPase domain (RuvB-L) region; sequence MENNELLDIT…FGVVFRLEFY (172 aa). Residues leucine 11, arginine 12, glycine 53, lysine 56, threonine 57, threonine 58, 119 to 121, arginine 162, tyrosine 172, and arginine 209 contribute to the ATP site; that span reads EDF. Threonine 57 contacts Mg(2+). The interval 173–243 is small ATPAse domain (RuvB-S); that stretch reads NSEELKEIVK…IAQEALIAMD (71 aa). The head domain (RuvB-H) stretch occupies residues 246–325; sequence DYGLDDMDRK…LKRKIPERLF (80 aa). Positions 301 and 306 each coordinate DNA.

This sequence belongs to the RuvB family. In terms of assembly, homohexamer. Forms an RuvA(8)-RuvB(12)-Holliday junction (HJ) complex. HJ DNA is sandwiched between 2 RuvA tetramers; dsDNA enters through RuvA and exits via RuvB. An RuvB hexamer assembles on each DNA strand where it exits the tetramer. Each RuvB hexamer is contacted by two RuvA subunits (via domain III) on 2 adjacent RuvB subunits; this complex drives branch migration. In the full resolvosome a probable DNA-RuvA(4)-RuvB(12)-RuvC(2) complex forms which resolves the HJ.

The protein localises to the cytoplasm. The enzyme catalyses ATP + H2O = ADP + phosphate + H(+). Its function is as follows. The RuvA-RuvB-RuvC complex processes Holliday junction (HJ) DNA during genetic recombination and DNA repair, while the RuvA-RuvB complex plays an important role in the rescue of blocked DNA replication forks via replication fork reversal (RFR). RuvA specifically binds to HJ cruciform DNA, conferring on it an open structure. The RuvB hexamer acts as an ATP-dependent pump, pulling dsDNA into and through the RuvAB complex. RuvB forms 2 homohexamers on either side of HJ DNA bound by 1 or 2 RuvA tetramers; 4 subunits per hexamer contact DNA at a time. Coordinated motions by a converter formed by DNA-disengaged RuvB subunits stimulates ATP hydrolysis and nucleotide exchange. Immobilization of the converter enables RuvB to convert the ATP-contained energy into a lever motion, pulling 2 nucleotides of DNA out of the RuvA tetramer per ATP hydrolyzed, thus driving DNA branch migration. The RuvB motors rotate together with the DNA substrate, which together with the progressing nucleotide cycle form the mechanistic basis for DNA recombination by continuous HJ branch migration. Branch migration allows RuvC to scan DNA until it finds its consensus sequence, where it cleaves and resolves cruciform DNA. In Thermodesulfovibrio yellowstonii (strain ATCC 51303 / DSM 11347 / YP87), this protein is Holliday junction branch migration complex subunit RuvB.